We begin with the raw amino-acid sequence, 61 residues long: Small ribosomal subunit protein uS14 (61 aa).

Positions 24, 27, 40, and 43 each coordinate Zn(2+).

It belongs to the universal ribosomal protein uS14 family. Zinc-binding uS14 subfamily. As to quaternary structure, part of the 30S ribosomal subunit. Contacts proteins S3 and S10. The cofactor is Zn(2+).

Binds 16S rRNA, required for the assembly of 30S particles and may also be responsible for determining the conformation of the 16S rRNA at the A site. The polypeptide is Small ribosomal subunit protein uS14 (Macrococcus caseolyticus (strain JCSC5402) (Macrococcoides caseolyticum)).